We begin with the raw amino-acid sequence, 331 residues long: 2-hydroxyacid dehydrogenase homolog (331 aa).

Residues 154 to 155 (HI), 234 to 236 (TSR), and aspartate 260 contribute to the NAD(+) site. Arginine 236 is a catalytic residue. The active site involves glutamate 265. The Proton donor role is filled by histidine 297. Residue 297–300 (HQAF) participates in NAD(+) binding.

The protein belongs to the D-isomer specific 2-hydroxyacid dehydrogenase family.

This Zymomonas mobilis subsp. mobilis (strain ATCC 31821 / ZM4 / CP4) protein is 2-hydroxyacid dehydrogenase homolog (ddh).